The following is a 670-amino-acid chain: Protein HBS1 (670 aa).

Disordered regions lie at residues 60–88 and 164–202; these read KDIQ…ESFQ and KTVS…VSGR. A compositionally biased stretch (acidic residues) spans 63 to 75; it reads QEEEADEDEDEDA. Over residues 189 to 200 the composition is skewed to low complexity; that stretch reads PSPKVPSSPVVS. Residues 245–468 enclose the tr-type G domain; it reads KSHIHMIVIG…DVIENFKIPE (224 aa). Positions 254 to 261 are G1; it reads GHVDAGKS. Residue 254-261 coordinates GTP; it reads GHVDAGKS. Residues 310–314 form a G2 region; sequence GITMD. The G3 stretch occupies residues 331–334; sequence DAPG. GTP is bound by residues 393–396 and 432–434; these read NKLD and SGL. Residues 393–396 form a G4 region; that stretch reads NKLD. The tract at residues 432 to 434 is G5; that stretch reads SGL.

The protein belongs to the TRAFAC class translation factor GTPase superfamily. Classic translation factor GTPase family. Component of the Pelota-HBS1L complex, also named Dom34-Hbs1 complex, composed of pelo and HBS1. In terms of tissue distribution, expressed in ovaries (at protein level).

The protein resides in the cytoplasm. The enzyme catalyses GTP + H2O = GDP + phosphate + H(+). Its function is as follows. GTPase component of the Pelota-HBS1L complex, a complex that recognizes stalled ribosomes and triggers the No-Go Decay (NGD) pathway. The Pelota-HBS1L complex recognizes ribosomes stalled at the 3' end of an mRNA and engages stalled ribosomes by destabilizing mRNA in the mRNA channel. Following ribosome-binding, the Pelota-HBS1L complex promotes recruitment of pix, which drives the disassembly of stalled ribosomes, followed by degradation of damaged mRNAs as part of the NGD pathway. Together with pelo, required for transposon silencing in the ovary and testis. Together with pelo, promotes meiosis and spermatid individualization during spermatogenesis. The polypeptide is Protein HBS1 (Drosophila melanogaster (Fruit fly)).